The primary structure comprises 568 residues: DNA ligase 2 (568 aa).

Glu254 serves as a coordination point for ATP. Lys256 (N6-AMP-lysine intermediate) is an active-site residue. Residues Arg261, Arg276, Glu306, Phe346, Arg425, and Lys431 each coordinate ATP.

The protein belongs to the ATP-dependent DNA ligase family. The cofactor is Mg(2+).

It catalyses the reaction ATP + (deoxyribonucleotide)n-3'-hydroxyl + 5'-phospho-(deoxyribonucleotide)m = (deoxyribonucleotide)n+m + AMP + diphosphate.. Its function is as follows. DNA ligase that seals nicks in double-stranded DNA during DNA replication, DNA recombination and DNA repair. The polypeptide is DNA ligase 2 (Methanosarcina acetivorans (strain ATCC 35395 / DSM 2834 / JCM 12185 / C2A)).